A 328-amino-acid chain; its full sequence is NADH-quinone oxidoreductase subunit H (328 aa).

Transmembrane regions (helical) follow at residues 8–28 (VAAI…AVGA), 81–101 (GLFV…FMVI), 114–134 (IGLL…LFAG), 154–174 (LSYE…AGSF), 186–206 (LWFI…GIAV), 237–257 (FFVG…TLFL), 265–285 (LPPI…FILL), and 304–324 (VCLP…LIFS).

This sequence belongs to the complex I subunit 1 family. NDH-1 is composed of 14 different subunits. Subunits NuoA, H, J, K, L, M, N constitute the membrane sector of the complex.

Its subcellular location is the cell inner membrane. It catalyses the reaction a quinone + NADH + 5 H(+)(in) = a quinol + NAD(+) + 4 H(+)(out). Functionally, NDH-1 shuttles electrons from NADH, via FMN and iron-sulfur (Fe-S) centers, to quinones in the respiratory chain. The immediate electron acceptor for the enzyme in this species is believed to be ubiquinone. Couples the redox reaction to proton translocation (for every two electrons transferred, four hydrogen ions are translocated across the cytoplasmic membrane), and thus conserves the redox energy in a proton gradient. This subunit may bind ubiquinone. This chain is NADH-quinone oxidoreductase subunit H, found in Chromohalobacter salexigens (strain ATCC BAA-138 / DSM 3043 / CIP 106854 / NCIMB 13768 / 1H11).